Consider the following 82-residue polypeptide: Omega-conotoxin-like TxMKLT1-031 (82 aa).

An N-terminal signal peptide occupies residues Met-1–Ala-22. Positions Asp-23–Glu-49 are excised as a propeptide. Intrachain disulfides connect Cys-53–Cys-71, Cys-60–Cys-76, and Cys-70–Cys-81.

Belongs to the conotoxin O1 superfamily. As to expression, expressed by the venom duct.

It localises to the secreted. Functionally, omega-conotoxins act at presynaptic membranes, they bind and block voltage-gated calcium channels (Cav). This is Omega-conotoxin-like TxMKLT1-031 from Conus textile (Cloth-of-gold cone).